The chain runs to 42 residues: MKKKDKGRLTGGVTPQGDLEGNTHNDPKTELEERAKKSNTKR.

The tract at residues 1-42 (MKKKDKGRLTGGVTPQGDLEGNTHNDPKTELEERAKKSNTKR) is disordered. The segment covering 21–36 (GNTHNDPKTELEERAK) has biased composition (basic and acidic residues).

The protein localises to the spore core. This Bacillus subtilis (strain 168) protein is Small, acid-soluble spore protein L (sspL).